Consider the following 290-residue polypeptide: Ribosomal RNA small subunit methyltransferase A (290 aa).

Residues asparagine 27, leucine 29, glycine 54, glutamate 75, aspartate 100, and asparagine 125 each contribute to the S-adenosyl-L-methionine site.

This sequence belongs to the class I-like SAM-binding methyltransferase superfamily. rRNA adenine N(6)-methyltransferase family. RsmA subfamily.

It is found in the cytoplasm. It catalyses the reaction adenosine(1518)/adenosine(1519) in 16S rRNA + 4 S-adenosyl-L-methionine = N(6)-dimethyladenosine(1518)/N(6)-dimethyladenosine(1519) in 16S rRNA + 4 S-adenosyl-L-homocysteine + 4 H(+). Functionally, specifically dimethylates two adjacent adenosines (A1518 and A1519) in the loop of a conserved hairpin near the 3'-end of 16S rRNA in the 30S particle. May play a critical role in biogenesis of 30S subunits. In Streptococcus gordonii (strain Challis / ATCC 35105 / BCRC 15272 / CH1 / DL1 / V288), this protein is Ribosomal RNA small subunit methyltransferase A.